A 91-amino-acid chain; its full sequence is Large ribosomal subunit protein bL27 (91 aa).

Over residues 1–10 (MAQKKGGGST) the composition is skewed to gly residues. The disordered stretch occupies residues 1–20 (MAQKKGGGSTRNGRDSQPKM).

It belongs to the bacterial ribosomal protein bL27 family.

This chain is Large ribosomal subunit protein bL27, found in Verminephrobacter eiseniae (strain EF01-2).